A 132-amino-acid chain; its full sequence is Small ribosomal subunit protein uS9 (132 aa).

The protein belongs to the universal ribosomal protein uS9 family.

The polypeptide is Small ribosomal subunit protein uS9 (rpsI) (Mycoplasma genitalium (strain ATCC 33530 / DSM 19775 / NCTC 10195 / G37) (Mycoplasmoides genitalium)).